We begin with the raw amino-acid sequence, 343 residues long: Methionine import ATP-binding protein MetN 3 (343 aa).

Positions 2 to 241 (IELSNITKVF…PKTPLAQKFI (240 aa)) constitute an ABC transporter domain. Residue 38-45 (GASGAGKS) participates in ATP binding.

Belongs to the ABC transporter superfamily. Methionine importer (TC 3.A.1.24) family. In terms of assembly, the complex is composed of two ATP-binding proteins (MetN), two transmembrane proteins (MetI) and a solute-binding protein (MetQ).

The protein resides in the cell inner membrane. It carries out the reaction L-methionine(out) + ATP + H2O = L-methionine(in) + ADP + phosphate + H(+). It catalyses the reaction D-methionine(out) + ATP + H2O = D-methionine(in) + ADP + phosphate + H(+). Its function is as follows. Part of the ABC transporter complex MetNIQ involved in methionine import. Responsible for energy coupling to the transport system. The chain is Methionine import ATP-binding protein MetN 3 from Pectobacterium atrosepticum (strain SCRI 1043 / ATCC BAA-672) (Erwinia carotovora subsp. atroseptica).